Here is a 562-residue protein sequence, read N- to C-terminus: Arginine--tRNA ligase (562 aa).

The short motif at 129-139 (ANPTGPLHVGH) is the 'HIGH' region element.

It belongs to the class-I aminoacyl-tRNA synthetase family. Monomer.

Its subcellular location is the cytoplasm. The catalysed reaction is tRNA(Arg) + L-arginine + ATP = L-arginyl-tRNA(Arg) + AMP + diphosphate. This is Arginine--tRNA ligase from Stenotrophomonas maltophilia (strain K279a).